The primary structure comprises 122 residues: Large ribosomal subunit protein uL14 (122 aa).

The protein belongs to the universal ribosomal protein uL14 family. Part of the 50S ribosomal subunit. Forms a cluster with proteins L3 and L19. In the 70S ribosome, L14 and L19 interact and together make contacts with the 16S rRNA in bridges B5 and B8.

Binds to 23S rRNA. Forms part of two intersubunit bridges in the 70S ribosome. In Anaeromyxobacter sp. (strain Fw109-5), this protein is Large ribosomal subunit protein uL14.